Consider the following 190-residue polypeptide: Protein FAM210B, mitochondrial (190 aa).

A mitochondrion-targeting transit peptide spans 1–58 (MAGLLTLLGPAGRVSTRLRPLAPWLLGTATSCAPPLWALALSHPVPDARLLRTARGDC). Positions 56 to 66 (GDCLSRQEPNR) are enriched in basic and acidic residues. A disordered region spans residues 56–81 (GDCLSRQEPNRTPEPGGSVTGTEKKL). Residues 78–189 (EKKLSRTQQL…VGLFKPPATK (112 aa)) form the DUF1279 domain. 2 helical membrane passes run 97 to 117 (VGVSMHIGISLVSLGIFYTVV) and 148 to 168 (FVVAYAIHKLFAPVRISITLV).

Belongs to the FAM210 family. In terms of tissue distribution, expressed in late erythroblast differentiation stages.

It is found in the mitochondrion. It localises to the mitochondrion outer membrane. Plays a role in erythroid differentiation. Involved in cell proliferation and tumor cell growth suppression. Involved in the metabolic reprogramming of cancer cells in a PDK4-dependent manner. This chain is Protein FAM210B, mitochondrial, found in Mus musculus (Mouse).